The primary structure comprises 501 residues: MANIGKITQIIGPVVDVGFEGEYALPQILDALEVTRPDGQKVILECQQHLGEDRVRTIAMDSTDGLTRGMEVKTYGMPISMPVGEDIRGRLYNVVGDAIDGIPSGVAANRMSIHRQAPKFEDLSTNTEVLFTGIKVIDLLEPYVKGGKIGLFGGAGVGKTVLIMELINNIAKAYAGLSVFAGVGERTREGNDLLREMIESNVIRYGDEFKHSMEKGEWDLSKVDATELLKSQATLVFGQMNEPPGARARVALAGLTVAEYFRDGDGQGQGRDILFFIDNIFRFTQAGSEVSALLGRMPSAVGYQPTLATEMGAMQERITSTKRGSITSVQAVYVPADDLTDPAPATTFAHLDATTVLNRKISELGIYPAVDPLDSTSRILSPEILGSEHYDCAQRVKEILQRYKELQDIIAILGMDELSEEDKQAVHRARRVQRFLSQPFHVAEQFTGLKGELVNIKDTIKGFNMIMDGALDHLPEAAFNLVGSIEQAIAKGEKLVADSKK.

Residue Gly153–Thr160 coordinates ATP.

This sequence belongs to the ATPase alpha/beta chains family. As to quaternary structure, F-type ATPases have 2 components, CF(1) - the catalytic core - and CF(0) - the membrane proton channel. CF(1) has five subunits: alpha(3), beta(3), gamma(1), delta(1), epsilon(1). CF(0) has three main subunits: a(1), b(2) and c(9-12). The alpha and beta chains form an alternating ring which encloses part of the gamma chain. CF(1) is attached to CF(0) by a central stalk formed by the gamma and epsilon chains, while a peripheral stalk is formed by the delta and b chains.

It localises to the cell inner membrane. The enzyme catalyses ATP + H2O + 4 H(+)(in) = ADP + phosphate + 5 H(+)(out). Produces ATP from ADP in the presence of a proton gradient across the membrane. The catalytic sites are hosted primarily by the beta subunits. The polypeptide is ATP synthase subunit beta (Cytophaga hutchinsonii (strain ATCC 33406 / DSM 1761 / CIP 103989 / NBRC 15051 / NCIMB 9469 / D465)).